A 246-amino-acid polypeptide reads, in one-letter code: Glandular kallikrein (246 aa).

The propeptide occupies 1–7; that stretch reads APPIQSR. The region spanning 8-243 is the Peptidase S1 domain; the sequence is IIGGRECEKN…YLDWINDTIT (236 aa). Cystine bridges form between Cys14/Cys158, Cys33/Cys49, Cys135/Cys204, Cys169/Cys183, and Cys194/Cys219. His48 serves as the catalytic Charge relay system. Residue Asn85 is glycosylated (N-linked (GlcNAc...) asparagine). Residues 85-104 are kallikrein (autolysis) loop; the sequence is NLSLLKXHTKADGKDYSHDL. Asp103 (charge relay system) is an active-site residue. Catalysis depends on Ser198, which acts as the Charge relay system. An N-linked (GlcNAc...) asparagine glycan is attached at Asn239.

The protein belongs to the peptidase S1 family. Kallikrein subfamily. As to quaternary structure, monomer.

The enzyme catalyses Preferential cleavage of Arg-|-Xaa bonds in small molecule substrates. Highly selective action to release kallidin (lysyl-bradykinin) from kininogen involves hydrolysis of Met-|-Xaa or Leu-|-Xaa.. Its function is as follows. Glandular kallikreins cleave Met-Lys and Arg-Ser bonds in kininogen to release Lys-bradykinin. This is Glandular kallikrein from Sus scrofa (Pig).